The primary structure comprises 953 residues: Calcium-transporting ATPase type 2C member 1 (953 aa).

Over 1 to 104 the chain is Cytoplasmic; the sequence is MDNLLPQSRF…NEFDISEDEP (104 aa). The helical transmembrane segment at 105 to 125 threads the bilayer; the sequence is LWKKYISQFKNPLIMLLLASA. Topologically, residues 126–138 are lumenal; the sequence is VISVLMHQFDDAV. A helical membrane pass occupies residues 139–157; sequence SITVAILIVVTVAFVQEYR. The Cytoplasmic segment spans residues 158 to 296; that stretch reads SEKSLEELSK…APKTPLQKSM (139 aa). The helical transmembrane segment at 297 to 316 threads the bilayer; that stretch reads DLLGKQLSFYSFGIIGIIML. The Lumenal segment spans residues 317 to 328; it reads VGWLLGKDILEM. The chain crosses the membrane as a helical span at residues 329 to 346; that stretch reads FTISVSLAVAAIPEGLPI. Ca(2+) is bound by residues Val-337, Ala-338, Ile-340, and Glu-342. At 347–733 the chain is on the cytoplasmic side; it reads VVTVTLALGV…EEGKGIYNNI (387 aa). Asp-384 (4-aspartylphosphate intermediate) is an active-site residue. Residues Asp-678 and Asp-682 each contribute to the Mg(2+) site. A helical membrane pass occupies residues 734-753; the sequence is KNFVRFQLSTSIAALTLISL. Topologically, residues 754–763 are lumenal; that stretch reads ATLMNFPNPL. The helical transmembrane segment at 764–784 threads the bilayer; that stretch reads NAMQILWINIIMDGPPAQSLG. Asn-772 and Asp-776 together coordinate Ca(2+). Residues 785–804 are Cytoplasmic-facing; that stretch reads VEPVDKDVIRKPPRNWKDSI. The helical transmembrane segment at 805–824 threads the bilayer; sequence LTKNLILKILVSSIIIVCGT. Over 825-842 the chain is Lumenal; sequence LFVFWRELRDNVITPRDT. The helical transmembrane segment at 843–862 threads the bilayer; it reads TMTFTCFVFFDMFNALSSRS. Residues 863 to 875 are Cytoplasmic-facing; that stretch reads QTKSVFEIGLCSN. Residues 876–894 traverse the membrane as a helical segment; it reads KMFCYAVLGSIMGQLLVIY. The Lumenal portion of the chain corresponds to 895–909; that stretch reads FPPLQKVFQTESLSI. A helical transmembrane segment spans residues 910 to 930; it reads LDLLFLLGLTSSVCIVAEIIK. Over 931–953 the chain is Cytoplasmic; it reads KVERSREKIQKPVSSTSSSFLEV.

It belongs to the cation transport ATPase (P-type) (TC 3.A.3) family. Type IIA subfamily. In terms of assembly, monomer. Homodimer.

It localises to the golgi apparatus. Its subcellular location is the trans-Golgi network membrane. The protein localises to the golgi stack membrane. The catalysed reaction is Ca(2+)(in) + ATP + H2O = Ca(2+)(out) + ADP + phosphate + H(+). It carries out the reaction Mn(2+)(in) + ATP + H2O = Mn(2+)(out) + ADP + phosphate + H(+). Functionally, ATP-driven pump that supplies the Golgi apparatus with Ca(2+) and Mn(2+) ions, both essential cofactors for processing and trafficking of newly synthesized proteins in the secretory pathway. Within a catalytic cycle, acquires Ca(2+) or Mn(2+) ions on the cytoplasmic side of the membrane and delivers them to the lumenal side. The transfer of ions across the membrane is coupled to ATP hydrolysis and is associated with a transient phosphorylation that shifts the pump conformation from inward-facing to outward-facing state. Plays a primary role in the maintenance of Ca(2+) homeostasis in the trans-Golgi compartment with a functional impact on Golgi and post-Golgi protein sorting as well as a structural impact on cisternae morphology. Responsible for loading the Golgi stores with Ca(2+) ions in keratinocytes, contributing to keratinocyte differentiation and epidermis integrity. Participates in Ca(2+) and Mn(2+) ions uptake into the Golgi store of hippocampal neurons and regulates protein trafficking required for neural polarity. May also play a role in the maintenance of Ca(2+) and Mn(2+) homeostasis and signaling in the cytosol while preventing cytotoxicity. This Bos taurus (Bovine) protein is Calcium-transporting ATPase type 2C member 1 (ATP2C1).